The chain runs to 164 residues: UPF0304 protein YfbU (164 aa).

It belongs to the UPF0304 family.

This is UPF0304 protein YfbU from Escherichia coli O127:H6 (strain E2348/69 / EPEC).